A 275-amino-acid chain; its full sequence is 2,3,4,5-tetrahydropyridine-2,6-dicarboxylate N-succinyltransferase (275 aa).

Belongs to the transferase hexapeptide repeat family.

It localises to the cytoplasm. It catalyses the reaction (S)-2,3,4,5-tetrahydrodipicolinate + succinyl-CoA + H2O = (S)-2-succinylamino-6-oxoheptanedioate + CoA. Its pathway is amino-acid biosynthesis; L-lysine biosynthesis via DAP pathway; LL-2,6-diaminopimelate from (S)-tetrahydrodipicolinate (succinylase route): step 1/3. This Paraburkholderia phytofirmans (strain DSM 17436 / LMG 22146 / PsJN) (Burkholderia phytofirmans) protein is 2,3,4,5-tetrahydropyridine-2,6-dicarboxylate N-succinyltransferase.